The primary structure comprises 100 residues: uncharacterized protein (100 aa).

Residues 78–100 (NNGNLDFKGRADERRQPVSNLRM) form a disordered region. Residues 84–93 (FKGRADERRQ) show a composition bias toward basic and acidic residues.

This is an uncharacterized protein from Saccharomyces cerevisiae (strain ATCC 204508 / S288c) (Baker's yeast).